A 236-amino-acid chain; its full sequence is 2-C-methyl-D-erythritol 4-phosphate cytidylyltransferase (236 aa).

This sequence belongs to the IspD/TarI cytidylyltransferase family. IspD subfamily.

The enzyme catalyses 2-C-methyl-D-erythritol 4-phosphate + CTP + H(+) = 4-CDP-2-C-methyl-D-erythritol + diphosphate. The protein operates within isoprenoid biosynthesis; isopentenyl diphosphate biosynthesis via DXP pathway; isopentenyl diphosphate from 1-deoxy-D-xylulose 5-phosphate: step 2/6. Functionally, catalyzes the formation of 4-diphosphocytidyl-2-C-methyl-D-erythritol from CTP and 2-C-methyl-D-erythritol 4-phosphate (MEP). This Azoarcus sp. (strain BH72) protein is 2-C-methyl-D-erythritol 4-phosphate cytidylyltransferase.